The following is a 127-amino-acid chain: Aspartate 1-decarboxylase (127 aa).

The Schiff-base intermediate with substrate; via pyruvic acid role is filled by Ser-25. Ser-25 is modified (pyruvic acid (Ser)). Residue Thr-57 participates in substrate binding. Tyr-58 serves as the catalytic Proton donor. 73–75 is a binding site for substrate; the sequence is GAA.

The protein belongs to the PanD family. In terms of assembly, heterooctamer of four alpha and four beta subunits. Pyruvate is required as a cofactor. Is synthesized initially as an inactive proenzyme, which is activated by self-cleavage at a specific serine bond to produce a beta-subunit with a hydroxyl group at its C-terminus and an alpha-subunit with a pyruvoyl group at its N-terminus.

It localises to the cytoplasm. The enzyme catalyses L-aspartate + H(+) = beta-alanine + CO2. It functions in the pathway cofactor biosynthesis; (R)-pantothenate biosynthesis; beta-alanine from L-aspartate: step 1/1. In terms of biological role, catalyzes the pyruvoyl-dependent decarboxylation of aspartate to produce beta-alanine. This Anoxybacillus flavithermus (strain DSM 21510 / WK1) protein is Aspartate 1-decarboxylase.